Here is a 365-residue protein sequence, read N- to C-terminus: Phosphatidylcholine:ceramide cholinephosphotransferase 4 (365 aa).

Over 1 to 44 the chain is Cytoplasmic; the sequence is MISYPFFSLSPPGLVPPPMAVPPVEMYSGSFWNRMRKPLPLRTQ. A helical transmembrane segment spans residues 45 to 65; that stretch reads VIRFTVVFVIVSFILAVALQI. Topologically, residues 66-92 are lumenal; sequence THERMPDPKVTKPLPDLGFELLTKVPG. A helical membrane pass occupies residues 93 to 113; sequence MYVLADCCIGFLNILSVFTAF. At 114–165 the chain is on the cytoplasmic side; that stretch reads KLYLLHRHCVGSGEPELPCNIPGVSRFFLSVWLCKENCRIELRNIHTIAWIR. Residues 166-186 form a helical membrane-spanning segment; sequence FITSYALLLLFRSAVIVMTSL. Over 187 to 229 the chain is Lumenal; the sequence is PAPDDLCQDPPKIENPVKNVILTVLTAGGGSIHCGDLMYSGHT. Histidine 228 is an active-site residue. Residues 230–250 traverse the membrane as a helical segment; the sequence is VILTLHLMFHWIYGAMVHWSF. A topological domain (cytoplasmic) is located at residue arginine 251. A helical transmembrane segment spans residues 252 to 272; sequence PVVTVVAIFGYYCIVASRFHY. Active-site residues include histidine 271 and aspartate 275. Residues 273-275 are Lumenal-facing; the sequence is TDD. Residues 276-296 form a helical membrane-spanning segment; the sequence is VLVAIYLTIATFIAVGHNADG. Topologically, residues 297-365 are cytoplasmic; that stretch reads APWQLQLFIR…SLMFKCGAYV (69 aa).

Belongs to the sphingomyelin synthase family.

Its subcellular location is the golgi apparatus membrane. The enzyme catalyses an N-acylsphing-4-enine + a 1,2-diacyl-sn-glycero-3-phosphocholine = a sphingomyelin + a 1,2-diacyl-sn-glycerol. The catalysed reaction is an N-acylsphinganine + a 1,2-diacyl-sn-glycero-3-phosphocholine = an N-acylsphinganine-1-phosphocholine + a 1,2-diacyl-sn-glycerol. It carries out the reaction an N-acylsphing-4-enine + a 1,2-diacyl-sn-glycero-3-phosphoethanolamine = an N-acylsphing-4-enine 1-phosphoethanolamine + a 1,2-diacyl-sn-glycerol. It catalyses the reaction an N-acylsphinganine + a 1,2-diacyl-sn-glycero-3-phosphoethanolamine = an N-acylsphinganine-1-phosphoethanolamine + a 1,2-diacyl-sn-glycerol. The enzyme catalyses a 1,2-diacyl-sn-glycero-3-phospho-(1D-myo-inositol) + an N-acylsphing-4-enine = an N-acylsphing-4-enine-(1D-myo-inositol) + a 1,2-diacyl-sn-glycerol. The catalysed reaction is an N-acylsphinganine + a 1,2-diacyl-sn-glycero-3-phospho-(1D-myo-inositol) = an N-acylsphinganine-(1D-myo-inositol) + a 1,2-diacyl-sn-glycerol. Functionally, bifunctional sphingomyelin (SM)/ethanolamine phosphorylceramide (EPC) synthase with minimal inositol phosphorylceramide (IPC) synthase activity. Specificity is likely to be defined by residues in the lumenal catalytic domain that interact with the polar head groups of the phospholipid donors. SM is synthesized by both stages of the parasite life cycle, bloodstream forms (BSF) and procyclic forms (PCF), by transferring the phosphoryl headgroup from a 1,2-diacyl-sn-glycero-3-phosphocholine to an N-acylsphing-4-enine (ceramide) or an N-acylsphinganine (dihydroceramide) with release of 1,2-diacyl-sn-glycerol. Also catalyzes the reverse reaction, production of ceramide from sphingomyelin. EPC is synthesized by transferring phosphoethanolamine from a 1,2-diacyl-sn-glycero-3-phosphoethanolamine to ceramide or dihydroceramide by BSF and PCF, while IPC is confined to PCF. The ceramide/dihydroceramide ratios are skewed towards dihydroceramide in PCF parasites and ceramide in BSF parasites, this is likely due to differential expression and/or regulation of dihydroceramide desaturase, the enzyme responsible for converting dihydroceramide to ceramide. In Trypanosoma brucei brucei, this protein is Phosphatidylcholine:ceramide cholinephosphotransferase 4.